Consider the following 283-residue polypeptide: Putative pyruvate, phosphate dikinase regulatory protein (283 aa).

154–161 lines the ADP pocket; the sequence is GVSRTSKT.

The protein belongs to the pyruvate, phosphate/water dikinase regulatory protein family. PDRP subfamily.

The catalysed reaction is N(tele)-phospho-L-histidyl/L-threonyl-[pyruvate, phosphate dikinase] + ADP = N(tele)-phospho-L-histidyl/O-phospho-L-threonyl-[pyruvate, phosphate dikinase] + AMP + H(+). It carries out the reaction N(tele)-phospho-L-histidyl/O-phospho-L-threonyl-[pyruvate, phosphate dikinase] + phosphate + H(+) = N(tele)-phospho-L-histidyl/L-threonyl-[pyruvate, phosphate dikinase] + diphosphate. Bifunctional serine/threonine kinase and phosphorylase involved in the regulation of the pyruvate, phosphate dikinase (PPDK) by catalyzing its phosphorylation/dephosphorylation. The protein is Putative pyruvate, phosphate dikinase regulatory protein of Afipia carboxidovorans (strain ATCC 49405 / DSM 1227 / KCTC 32145 / OM5) (Oligotropha carboxidovorans).